Here is a 154-residue protein sequence, read N- to C-terminus: Acidic phospholipase A2 1 (154 aa).

The first 19 residues, Met-1 to Ala-19, serve as a signal peptide directing secretion. The propeptide occupies Ala-20–Leu-27. Intrachain disulfides connect Cys-38–Cys-104, Cys-54–Cys-153, Cys-56–Cys-72, Cys-71–Cys-132, Cys-78–Cys-125, Cys-88–Cys-118, and Cys-111–Cys-123. Residues Phe-55, Gly-57, and Gly-59 each coordinate Ca(2+). His-75 is an active-site residue. Asp-76 serves as a coordination point for Ca(2+). Asp-126 is a catalytic residue.

Belongs to the phospholipase A2 family. Group I subfamily. D49 sub-subfamily. In terms of assembly, monomer. It depends on Ca(2+) as a cofactor. As to expression, expressed by the venom gland.

It is found in the secreted. The catalysed reaction is a 1,2-diacyl-sn-glycero-3-phosphocholine + H2O = a 1-acyl-sn-glycero-3-phosphocholine + a fatty acid + H(+). In terms of biological role, snake venom phospholipase A2 (PLA2) that shows moderate enzymatic activity and exhibits procoagulant activity. PLA2 catalyzes the calcium-dependent hydrolysis of the 2-acyl groups in 3-sn-phosphoglycerides. This is Acidic phospholipase A2 1 from Pseudonaja textilis (Eastern brown snake).